The sequence spans 651 residues: E3 SUMO-protein ligase PIAS1 (651 aa).

Ala-2 carries the N-acetylalanine modification. Residues 2–200 (ADSAELKQMV…KCDFTVQVQL (199 aa)) form a required for interaction with MSX1 region. Residues 11–45 (VMSLRVSELQVLLGYAGRNKHGRKHELLTKALHLL) form the SAP domain. An LXXLL motif motif is present at residues 19–23 (LQVLL). Residues Lys-40 and Lys-46 each participate in a glycyl lysine isopeptide (Lys-Gly) (interchain with G-Cter in SUMO2) cross-link. Residues 56-64 (KIKELYRRR) carry the Nuclear localization signal motif. The 165-residue stretch at 124 to 288 (HLTSALHPVH…SMAVYLVKQL (165 aa)) folds into the PINIT domain. Residues Lys-137 and Lys-238 each participate in a glycyl lysine isopeptide (Lys-Gly) (interchain with G-Cter in SUMO2) cross-link. An SP-RING-type zinc finger spans residues 320–405 (PDSEIATTSL…LKYCTDCDEI (86 aa)). Zn(2+) is bound by residues Cys-351, His-353, Cys-374, and Cys-377. The Nuclear localization signal motif lies at 368-380 (KKPTWVCPVCDKK). Lys-453 is covalently cross-linked (Glycyl lysine isopeptide (Lys-Gly) (interchain with G-Cter in SUMO2)). Residues 462 to 473 (LTIDSSSDEEEE) form an SUMO1-binding region. The interval 465–511 (DSSSDEEEEEPPAKRTCPSLSPTSPLSNKGILSLPHQASPVSRTPSL) is disordered. Ser-467, Ser-468, Ser-483, and Ser-485 each carry phosphoserine. Residues 482–491 (PSLSPTSPLS) are compositionally biased toward low complexity. Thr-487 carries the post-translational modification Phosphothreonine. Ser-488 and Ser-491 each carry phosphoserine. Residue Lys-493 forms a Glycyl lysine isopeptide (Lys-Gly) (interchain with G-Cter in SUMO2) linkage. Residues Ser-503, Ser-510, and Ser-522 each carry the phosphoserine modification. Repeat copies occupy residues 520–523 (NTSL) and 557–560 (NTSL). The tract at residues 520–615 (NTSLIQDYRH…GSSSGSNSSL (96 aa)) is 4 X 4 AA repeats of N-T-S-L. Residues 598–601 (STSL) form a 3; approximate repeat. The interval 600 to 630 (SLPATNGSSSGSNSSLVSSNSLRESHGHGVA) is disordered. Residues 605–621 (NGSSSGSNSSLVSSNSL) show a composition bias toward low complexity. A 4; approximate repeat occupies 612–615 (NSSL).

This sequence belongs to the PIAS family. In terms of assembly, interacts with NR2C1; the interaction promotes its sumoylation. Interacts with DDX21, CSRP2, AXIN1, JUN, SATB2, PLAG1, TP53 and STAT1 (dimer), following IFNA1-stimulation. Interacts with SP3 (preferentially when SUMO-modified). Interacts with KLF8; the interaction results in SUMO ligation and repression of KLF8 transcriptional activity and of its cell cycle progression into G(1) phase. Interacts with CHUK/IKKA; this interaction induces PIAS1 phosphorylation. Interacts with PTK2/FAK1; the interaction promotes its sumoylation. Interacts with SUMO1, UBE2I, NCOA2 and AR. Interacts with NR2C1; the interaction promotes its sumoylation. Interacts with DDX5. Interacts with MTA1. Interacts with PML (isoform PML-12). Interacts with PRDM1. Interacts (via N-terminus) with MSX1 (via C-terminus); the interaction is required for the localization of both proteins to the nuclear periphery and specific binding of MSX1 to the core enhancer region in target gene promoters. In terms of processing, sumoylated. In terms of tissue distribution, expressed in kidney, heart, spleen, brain and cerebellum; weak expression, if any, in liver and lung.

The protein localises to the nucleus. It localises to the nucleus speckle. The protein resides in the PML body. Its subcellular location is the cytoplasm. It is found in the cytoskeleton. It carries out the reaction S-ubiquitinyl-[E2 ubiquitin-conjugating enzyme]-L-cysteine + [acceptor protein]-L-lysine = [E2 ubiquitin-conjugating enzyme]-L-cysteine + N(6)-ubiquitinyl-[acceptor protein]-L-lysine.. Its pathway is protein modification; protein sumoylation. In terms of biological role, functions as an E3-type small ubiquitin-like modifier (SUMO) ligase, stabilizing the interaction between UBE2I and the substrate, and as a SUMO-tethering factor. Catalyzes sumoylation of various proteins, such as CEBPB, MRE11, MTA1, PTK2 and PML. Plays a crucial role as a transcriptional coregulation in various cellular pathways, including the STAT pathway, the p53 pathway and the steroid hormone signaling pathway. In vitro, binds A/T-rich DNA. The effects of this transcriptional coregulation, transactivation or silencing, may vary depending upon the biological context. Mediates sumoylation of MRE11, stabilizing MRE11 on chromatin during end resection. Sumoylates PML (at 'Lys-65' and 'Lys-160') and PML-RAR and promotes their ubiquitin-mediated degradation. PIAS1-mediated sumoylation of PML promotes its interaction with CSNK2A1/CK2 which in turn promotes PML phosphorylation and degradation. Enhances the sumoylation of MTA1 and may participate in its paralog-selective sumoylation. Plays a dynamic role in adipogenesis by promoting the SUMOylation and degradation of CEBPB. Mediates the nuclear mobility and localization of MSX1 to the nuclear periphery, whereby MSX1 is brought into the proximity of target myoblast differentiation factor genes. Also required for the binding of MSX1 to the core enhancer region in target gene promoter regions, independent of its sumoylation activity. Capable of binding to the core enhancer region TAAT box in the MYOD1 gene promoter. This chain is E3 SUMO-protein ligase PIAS1 (Pias1), found in Mus musculus (Mouse).